We begin with the raw amino-acid sequence, 235 residues long: Small ribosomal subunit protein uS3 (235 aa).

The KH type-2 domain maps to 39-107 (VRKFLNKELA…PAQINIAEVK (69 aa)). Positions 215-235 (AQSEQQPADKPKKAPRGKGRK) are disordered.

This sequence belongs to the universal ribosomal protein uS3 family. As to quaternary structure, part of the 30S ribosomal subunit. Forms a tight complex with proteins S10 and S14.

Its function is as follows. Binds the lower part of the 30S subunit head. Binds mRNA in the 70S ribosome, positioning it for translation. In Haemophilus influenzae (strain PittEE), this protein is Small ribosomal subunit protein uS3.